A 342-amino-acid chain; its full sequence is S-adenosylmethionine:tRNA ribosyltransferase-isomerase (342 aa).

This sequence belongs to the QueA family. As to quaternary structure, monomer.

It localises to the cytoplasm. It carries out the reaction 7-aminomethyl-7-carbaguanosine(34) in tRNA + S-adenosyl-L-methionine = epoxyqueuosine(34) in tRNA + adenine + L-methionine + 2 H(+). It participates in tRNA modification; tRNA-queuosine biosynthesis. Functionally, transfers and isomerizes the ribose moiety from AdoMet to the 7-aminomethyl group of 7-deazaguanine (preQ1-tRNA) to give epoxyqueuosine (oQ-tRNA). In Bacillus velezensis (strain DSM 23117 / BGSC 10A6 / LMG 26770 / FZB42) (Bacillus amyloliquefaciens subsp. plantarum), this protein is S-adenosylmethionine:tRNA ribosyltransferase-isomerase.